The primary structure comprises 190 residues: uncharacterized protein (190 aa).

This is an uncharacterized protein from Acidianus hospitalis (AFV-1).